Here is a 191-residue protein sequence, read N- to C-terminus: Peptidyl-tRNA hydrolase (191 aa).

Tyr16 serves as a coordination point for tRNA. His21 serves as the catalytic Proton acceptor. Residues Tyr67, Asn69, and Asn115 each coordinate tRNA.

This sequence belongs to the PTH family. As to quaternary structure, monomer.

The protein localises to the cytoplasm. The enzyme catalyses an N-acyl-L-alpha-aminoacyl-tRNA + H2O = an N-acyl-L-amino acid + a tRNA + H(+). In terms of biological role, hydrolyzes ribosome-free peptidyl-tRNAs (with 1 or more amino acids incorporated), which drop off the ribosome during protein synthesis, or as a result of ribosome stalling. Functionally, catalyzes the release of premature peptidyl moieties from peptidyl-tRNA molecules trapped in stalled 50S ribosomal subunits, and thus maintains levels of free tRNAs and 50S ribosomes. This Wigglesworthia glossinidia brevipalpis protein is Peptidyl-tRNA hydrolase.